The following is a 343-amino-acid chain: Protein RecA (343 aa).

68 to 75 (GPESGGKT) is a binding site for ATP.

This sequence belongs to the RecA family.

The protein localises to the cytoplasm. Its function is as follows. Can catalyze the hydrolysis of ATP in the presence of single-stranded DNA, the ATP-dependent uptake of single-stranded DNA by duplex DNA, and the ATP-dependent hybridization of homologous single-stranded DNAs. It interacts with LexA causing its activation and leading to its autocatalytic cleavage. The sequence is that of Protein RecA from Syntrophus aciditrophicus (strain SB).